Consider the following 133-residue polypeptide: Ribonuclease P protein component (133 aa).

The tract at residues 114–133 is disordered; the sequence is RSRPTPEEKSEPAGVDSTDA.

The protein belongs to the RnpA family. As to quaternary structure, consists of a catalytic RNA component (M1 or rnpB) and a protein subunit.

The catalysed reaction is Endonucleolytic cleavage of RNA, removing 5'-extranucleotides from tRNA precursor.. Functionally, RNaseP catalyzes the removal of the 5'-leader sequence from pre-tRNA to produce the mature 5'-terminus. It can also cleave other RNA substrates such as 4.5S RNA. The protein component plays an auxiliary but essential role in vivo by binding to the 5'-leader sequence and broadening the substrate specificity of the ribozyme. This chain is Ribonuclease P protein component, found in Pseudomonas syringae pv. tomato (strain ATCC BAA-871 / DC3000).